The sequence spans 325 residues: ATPase ASNA1 homolog 2 (325 aa).

ATP is bound at residue 22-29 (KGGVGKTT). Asp-51 is a catalytic residue. Glu-231 and Asn-258 together coordinate ATP. Zn(2+) is bound by residues Cys-267 and Cys-270.

This sequence belongs to the arsA ATPase family. Homodimer.

It localises to the cytoplasm. The protein localises to the endoplasmic reticulum. Its function is as follows. ATPase required for the post-translational delivery of tail-anchored (TA) proteins to the endoplasmic reticulum. Recognizes and selectively binds the transmembrane domain of TA proteins in the cytosol. This complex then targets to the endoplasmic reticulum by membrane-bound receptors, where the tail-anchored protein is released for insertion. This process is regulated by ATP binding and hydrolysis. ATP binding drives the homodimer towards the closed dimer state, facilitating recognition of newly synthesized TA membrane proteins. ATP hydrolysis is required for insertion. Subsequently, the homodimer reverts towards the open dimer state, lowering its affinity for the membrane-bound receptor, and returning it to the cytosol to initiate a new round of targeting. This Paramecium tetraurelia protein is ATPase ASNA1 homolog 2.